The chain runs to 220 residues: Sec-independent protein translocase protein TatB (220 aa).

A helical membrane pass occupies residues 1-21; sequence MFDIGFSELLLVLVIGLVVLG. Residues 192–220 form a disordered region; sequence KQQIDTIDSHGTDLSSAGPSRIHQPGGDQ.

This sequence belongs to the TatB family. In terms of assembly, the Tat system comprises two distinct complexes: a TatABC complex, containing multiple copies of TatA, TatB and TatC subunits, and a separate TatA complex, containing only TatA subunits. Substrates initially bind to the TatABC complex, which probably triggers association of the separate TatA complex to form the active translocon.

It is found in the cell inner membrane. Its function is as follows. Part of the twin-arginine translocation (Tat) system that transports large folded proteins containing a characteristic twin-arginine motif in their signal peptide across membranes. Together with TatC, TatB is part of a receptor directly interacting with Tat signal peptides. TatB may form an oligomeric binding site that transiently accommodates folded Tat precursor proteins before their translocation. This chain is Sec-independent protein translocase protein TatB, found in Yersinia pestis bv. Antiqua (strain Antiqua).